The primary structure comprises 175 residues: Co-chaperone protein HscB homolog (175 aa).

Positions 2–76 (NYFALFNLTP…RAEHMLELRG (75 aa)) constitute a J domain.

It belongs to the HscB family. In terms of assembly, interacts with HscA and stimulates its ATPase activity.

In terms of biological role, co-chaperone involved in the maturation of iron-sulfur cluster-containing proteins. Seems to help targeting proteins to be folded toward HscA. This chain is Co-chaperone protein HscB homolog, found in Pseudoalteromonas atlantica (strain T6c / ATCC BAA-1087).